The primary structure comprises 966 residues: MSSATSPIILKWDPKSLEIRTLTVESLLEPLVTQVTTLVNTSNKGPSGKKKGRSKKAHVLAASVEQATQNFLEKGEQIAKESQDLKEELISAVEDVRKQGDTMRITSSEFADDPCSSVKRGTMVRAARALLSAVTRLLILADMADVMRLLIHLKIVEEALESVKNATNEQDLAHRFKEFGKEMVKLNYVAARRQQELKDPHCRDEMAAARGALKKNATMLYTASQAFLRHPDVAATRANRDYVFKQVQEAIAGIANAAQATSPTDEKQAHTGIGELAAALNEFDNKIILDPLTFSEARFRPSLEEKLESIISGAALMADSSCTRDDRRERIVAECNSVRQALQDLLSEYMNNCRYGTWMDESCKSGRKEKGDPLNIAIDKMTKKTRDLRRQLRKAVMDHISDSFLETNVPLLVLIEAAKNGNEKEVKEYAQVFREHANKLVEVANLACSISNNEEGVKLVRMAATQIDSLCPQVINAALTLAARPQSKVAQDNMDVFKDQWEKQVRVLTEAVDDITSVDDFLSVSENHILEDVNKCVIALQEGDVDTLDRTAGAIRGRAARVIHIINAEMENYEAGVYTEKVLDATKLLCETVMPRFAEQVEFAIEALSANIPQPFEENEFIDASRLVYDGVRDIRKAVLMIRTPEELEDDSDFEQEDYDVRSRTSVQTEDDQLIAGQSARAIMAQLPQEEKAKIAEQVEIFHQEKSKLDAEVAKWDDSGNDIIVLAKQMCMIMMEMTDFTRGKGPLKNTSDVINAAKKIAEAGSRMDKLARAVADQCPDSACKQDLIAYLQRIALYCHQLNICSKVKAEVQNLGGELIVSGTAVQSTFTTFYEVAGDVIAGGRDSQLSLDLLPSCTEGSLFGSGSRDSTMLDSATSLIQAAKNLMNAVVLTVKASYVASTKYQKVYGTAAVNSPVVSWKMKAPEKKPLVKREKPEEYQTRVRRGSQKKHISPVQALSEFKAMDSF.

Positions 924-940 (PEKKPLVKREKPEEYQT) are enriched in basic and acidic residues. The disordered stretch occupies residues 924–952 (PEKKPLVKREKPEEYQTRVRRGSQKKHIS). A compositionally biased stretch (basic residues) spans 941–951 (RVRRGSQKKHI).

The protein belongs to the vinculin/alpha-catenin family.

It localises to the cell membrane. Its subcellular location is the cytoplasm. The protein resides in the cytoskeleton. It is found in the cell junction. The protein localises to the adherens junction. It localises to the cell projection. Its subcellular location is the axon. The protein resides in the nucleus. May function as a linker between cadherin adhesion receptors and the cytoskeleton to regulate cell-cell adhesion and differentiation in the nervous system. This Xenopus tropicalis (Western clawed frog) protein is Catenin alpha-2 (ctnna2).